Here is a 154-residue protein sequence, read N- to C-terminus: Myoglobin (154 aa).

Residues 2-148 enclose the Globin domain; the sequence is GLSDGEWQLV…FRNDMAAKYK (147 aa). The residue at position 4 (Ser4) is a Phosphoserine. His65 contacts nitrite. O2 is bound at residue His65. Thr68 is subject to Phosphothreonine. His94 is a binding site for heme b.

This sequence belongs to the globin family. As to quaternary structure, monomeric.

The protein resides in the cytoplasm. Its subcellular location is the sarcoplasm. It catalyses the reaction Fe(III)-heme b-[protein] + nitric oxide + H2O = Fe(II)-heme b-[protein] + nitrite + 2 H(+). The catalysed reaction is H2O2 + AH2 = A + 2 H2O. In terms of biological role, monomeric heme protein which primary function is to store oxygen and facilitate its diffusion within muscle tissues. Reversibly binds oxygen through a pentacoordinated heme iron and enables its timely and efficient release as needed during periods of heightened demand. Depending on the oxidative conditions of tissues and cells, and in addition to its ability to bind oxygen, it also has a nitrite reductase activity whereby it regulates the production of bioactive nitric oxide. Under stress conditions, like hypoxia and anoxia, it also protects cells against reactive oxygen species thanks to its pseudoperoxidase activity. This Ornithorhynchus anatinus (Duckbill platypus) protein is Myoglobin (MB).